The sequence spans 445 residues: 6-phosphogluconate dehydrogenase, decarboxylating (445 aa).

Residues 1–4 (AVMG), 22–24 (NRS), 63–65 (VQA), and asparagine 91 contribute to the NADP(+) site. Substrate contacts are provided by residues asparagine 91 and 117 to 119 (SGG). Lysine 172 (proton acceptor) is an active-site residue. 175–176 (HN) lines the substrate pocket. Glutamate 179 functions as the Proton donor in the catalytic mechanism. Substrate contacts are provided by tyrosine 180, lysine 249, arginine 276, arginine 434, and histidine 440.

Belongs to the 6-phosphogluconate dehydrogenase family. Homodimer.

It catalyses the reaction 6-phospho-D-gluconate + NADP(+) = D-ribulose 5-phosphate + CO2 + NADPH. It participates in carbohydrate degradation; pentose phosphate pathway; D-ribulose 5-phosphate from D-glucose 6-phosphate (oxidative stage): step 3/3. Its function is as follows. Catalyzes the oxidative decarboxylation of 6-phosphogluconate to ribulose 5-phosphate and CO(2), with concomitant reduction of NADP to NADPH. The protein is 6-phosphogluconate dehydrogenase, decarboxylating (gnd) of Pseudescherichia vulneris (Escherichia vulneris).